The primary structure comprises 253 residues: U1 small nuclear ribonucleoprotein A (253 aa).

The RRM 1 domain occupies 23-102; sequence VTIYINNLNE…KPMRIQYAKT (80 aa). Residues 111–140 are disordered; sequence DGTFVPRERRKRNDEKPEKKQKREQHHDVS. The RRM 2 domain occupies 179 to 253; the sequence is NILFVQNLPH…NQMLISYAKK (75 aa).

This sequence belongs to the RRM U1 A/B'' family. Component of the spliceosome where it is associated with snRNP U1.

It is found in the nucleus. The protein localises to the nucleolus. In terms of biological role, involved in nuclear pre-mRNA splicing. The chain is U1 small nuclear ribonucleoprotein A from Oryza sativa subsp. indica (Rice).